A 303-amino-acid polypeptide reads, in one-letter code: Probable meiosis-specific protein SPO11 homolog (303 aa).

Residues 1 to 96 enclose the Topo IIA-type catalytic domain; that stretch reads MALAPTSSAI…LGVRNTLKGI (96 aa). Tyr57 acts as the O-(5'-phospho-DNA)-tyrosine intermediate in catalysis. Residues Glu144 and Asp196 each coordinate Mg(2+).

Belongs to the TOP6A family. Requires Mg(2+) as cofactor.

It localises to the nucleus. It carries out the reaction ATP-dependent breakage, passage and rejoining of double-stranded DNA.. Required for meiotic recombination. Mediates DNA cleavage that forms the double-strand breaks (DSB) that initiate meiotic recombination. This is Probable meiosis-specific protein SPO11 homolog (SPO11) from Encephalitozoon cuniculi (strain GB-M1) (Microsporidian parasite).